The sequence spans 501 residues: Phenylalanine--tRNA ligase alpha subunit (501 aa).

L-phenylalanine-binding positions include Thr-344, 383 to 385 (QID), and Phe-424. Residue Glu-426 coordinates Mg(2+). Position 449 (Phe-449) interacts with L-phenylalanine.

It belongs to the class-II aminoacyl-tRNA synthetase family. Phe-tRNA synthetase alpha subunit type 2 subfamily. As to quaternary structure, tetramer of two alpha and two beta subunits. It depends on Mg(2+) as a cofactor.

It localises to the cytoplasm. The catalysed reaction is tRNA(Phe) + L-phenylalanine + ATP = L-phenylalanyl-tRNA(Phe) + AMP + diphosphate + H(+). The protein is Phenylalanine--tRNA ligase alpha subunit of Thermococcus kodakarensis (strain ATCC BAA-918 / JCM 12380 / KOD1) (Pyrococcus kodakaraensis (strain KOD1)).